A 150-amino-acid chain; its full sequence is Large ribosomal subunit protein uL15 (150 aa).

The segment at 1–55 (MADNEILQMHDLKPAPGAKKDRTRVGRGEGSKGKTSGRGAKGQTKRNHVRPGFEG) is disordered. Over residues 8–32 (QMHDLKPAPGAKKDRTRVGRGEGSK) the composition is skewed to basic and acidic residues.

This sequence belongs to the universal ribosomal protein uL15 family. As to quaternary structure, part of the 50S ribosomal subunit.

Its function is as follows. Binds to the 23S rRNA. The protein is Large ribosomal subunit protein uL15 of Bifidobacterium longum (strain NCC 2705).